The following is a 92-amino-acid chain: Toxin RelE3 (92 aa).

Belongs to the RelE toxin family.

Its function is as follows. Toxic component of a type II toxin-antitoxin (TA) system. Its toxic effect is neutralized by coexpression with cognate antitoxin RelB3 but no other ParD or RelB antitoxin. This Caulobacter vibrioides (strain ATCC 19089 / CIP 103742 / CB 15) (Caulobacter crescentus) protein is Toxin RelE3 (relE3).